The chain runs to 567 residues: Multidrug and toxin extrusion protein 1 (567 aa).

N-acetylmethionine is present on Met1. Residues 1-37 are Cytoplasmic-facing; sequence MERTEESAPGPGGADAASERRGLRCLLLPGFLEELRA. Position 18 is a phosphoserine (Ser18). The helical transmembrane segment at 38–58 threads the bilayer; that stretch reads LLVLAGPAFLAQLMMFLISFI. The Extracellular segment spans residues 59 to 72; it reads SSVFCGHLGKLELD. A helical transmembrane segment spans residues 73–93; sequence AVTLAIAVINVTGISVGHGLS. The Cytoplasmic segment spans residues 94-120; it reads SACDTLISQTYGSQNLKHVGVILQRGT. A helical transmembrane segment spans residues 121–141; sequence LILLLCCFPCWALFINTEQIL. Residues 142-152 lie on the Extracellular side of the membrane; the sequence is LLFRQDPDVSR. A helical transmembrane segment spans residues 153–173; it reads LTQTYVMIFIPALPAAFLYTL. Residues 174–187 lie on the Cytoplasmic side of the membrane; sequence QVKYLLNQGIVLPQ. The chain crosses the membrane as a helical span at residues 188–208; the sequence is IMTGIAANLVNALANYVFLYH. Topologically, residues 209–216 are extracellular; sequence LHLGVMGS. Residues 217–237 form a helical membrane-spanning segment; sequence ALANTISQFALAIFLFLYILW. Residues 238–257 lie on the Cytoplasmic side of the membrane; that stretch reads RRLHQATWGGWSWECLQDWA. Residues 258–277 form a helical membrane-spanning segment; sequence SFLRLAIPSMLMLCIEWWAY. Over 278-295 the chain is Extracellular; the sequence is EVGSFLSGILGMVELGAQ. The helical transmembrane segment at 296–316 threads the bilayer; the sequence is SITYELAIIVYMIPSGFSVAA. The Cytoplasmic segment spans residues 317-336; the sequence is NVRVGNALGAGNIDQAKKSS. The chain crosses the membrane as a helical span at residues 337 to 357; that stretch reads AISLIVTELFAVTFCVLLLGC. Topologically, residues 358–370 are extracellular; that stretch reads KDLVGYIFTTDRD. Residues 371–391 form a helical membrane-spanning segment; it reads IVALVAQVIPIYAVSHLFEGL. Topologically, residues 392–408 are cytoplasmic; sequence ACTCGGILRGTGNQKVG. The helical transmembrane segment at 409 to 429 threads the bilayer; that stretch reads AIVNAIGYYVIGLPIGIALMF. Over 430–437 the chain is Extracellular; sequence AAKLGVIG. Residues 438–458 traverse the membrane as a helical segment; the sequence is LWSGIIICTTCQTTCFLAFIA. At 459–543 the chain is on the cytoplasmic side; sequence RLNWKRACQQ…LSGKQLALRR (85 aa). The helical transmembrane segment at 544-564 threads the bilayer; that stretch reads GLLLLGVVLVLVGGILVRVYI. Topologically, residues 565–567 are extracellular; the sequence is RIE.

It belongs to the multi antimicrobial extrusion (MATE) (TC 2.A.66.1) family. As to expression, predominantly expressed in kidney and liver. Also expressed in various cells, including brain glia-like cells and capillaries, pancreatic duct cells, urinary bladder epithelium, adrenal gland cortex, heart, stomach, small intestine, thyroid gland, testes, alpha cells of the islets of Langerhans, Leydig cells, and vitamin A-storing Ito cells. Expressed in heart, stomach, small intestine, bladder, thyroid gland, adrenal gland and testes (at protein level).

Its subcellular location is the cell membrane. The protein resides in the apical cell membrane. The enzyme catalyses thiamine(out) + H(+)(in) = thiamine(in) + H(+)(out). It catalyses the reaction estrone 3-sulfate(in) + H(+)(out) = estrone 3-sulfate(out) + H(+)(in). The catalysed reaction is creatinine(in) + H(+)(out) = creatinine(out) + H(+)(in). It carries out the reaction agmatine(in) + H(+)(out) = agmatine(out) + H(+)(in). In terms of biological role, multidrug efflux pump that functions as a H(+)/organic cation antiporter. Plays a physiological role in the excretion of cationic compounds including endogenous metabolites, drugs, toxins through the kidney and liver, into urine and bile respectively. Mediates the efflux of endogenous compounds such as creatinine, vitamin B1/thiamine, agmatine and estrone-3-sulfate. May also contribute to regulate the transport of cationic compounds in testis across the blood-testis-barrier. This Mus musculus (Mouse) protein is Multidrug and toxin extrusion protein 1 (Slc47a1).